The primary structure comprises 173 residues: MPSSNNKDNFLDKAFTVIAEGIVKMMPIAAKEKQAYIYYREGFAAQNNGDYSEALENYEESLKLEENPVDRGETLKNMAIIYMSNGDEDRALETYVKALDQNPKQPSCLKNMGLIYEKRGRSAQQRGLQDESDIWFDKAADVWTKAVRLYPGGYLDIENWLKTTGRSKIDVYL.

3 TPR repeats span residues alanine 35–proline 68, glycine 72–glutamine 105, and glycine 120–glycine 153.

This sequence belongs to the Ycf3 family.

Its subcellular location is the cellular thylakoid membrane. In terms of biological role, essential for the assembly of the photosystem I (PSI) complex. May act as a chaperone-like factor to guide the assembly of the PSI subunits. In Prochlorococcus marinus (strain MIT 9211), this protein is Photosystem I assembly protein Ycf3.